The following is a 559-amino-acid chain: 2-succinyl-5-enolpyruvyl-6-hydroxy-3-cyclohexene-1-carboxylate synthase (559 aa).

Belongs to the TPP enzyme family. MenD subfamily. As to quaternary structure, homodimer. Mg(2+) serves as cofactor. Mn(2+) is required as a cofactor. Requires thiamine diphosphate as cofactor.

It carries out the reaction isochorismate + 2-oxoglutarate + H(+) = 5-enolpyruvoyl-6-hydroxy-2-succinyl-cyclohex-3-ene-1-carboxylate + CO2. Its pathway is quinol/quinone metabolism; 1,4-dihydroxy-2-naphthoate biosynthesis; 1,4-dihydroxy-2-naphthoate from chorismate: step 2/7. The protein operates within quinol/quinone metabolism; menaquinone biosynthesis. Functionally, catalyzes the thiamine diphosphate-dependent decarboxylation of 2-oxoglutarate and the subsequent addition of the resulting succinic semialdehyde-thiamine pyrophosphate anion to isochorismate to yield 2-succinyl-5-enolpyruvyl-6-hydroxy-3-cyclohexene-1-carboxylate (SEPHCHC). This is 2-succinyl-5-enolpyruvyl-6-hydroxy-3-cyclohexene-1-carboxylate synthase from Cytophaga hutchinsonii (strain ATCC 33406 / DSM 1761 / CIP 103989 / NBRC 15051 / NCIMB 9469 / D465).